We begin with the raw amino-acid sequence, 301 residues long: Probable alpha-L-glutamate ligase 2 (301 aa).

In terms of domain architecture, ATP-grasp spans 104-287; it reads LQLLSRKGIG…VTEPIVEYIE (184 aa). Residues Lys141, 178–179, Asp187, and 211–213 contribute to the ATP site; these read EY and RSN. Residues Asp248, Glu260, and Asn262 each coordinate Mg(2+). 3 residues coordinate Mn(2+): Asp248, Glu260, and Asn262.

It belongs to the RimK family. It depends on Mg(2+) as a cofactor. Requires Mn(2+) as cofactor.

The chain is Probable alpha-L-glutamate ligase 2 from Shewanella baltica (strain OS195).